The following is a 212-amino-acid chain: Calaxin (212 aa).

EF-hand domains follow at residues 65–100 (TDDMIMDRVFRGFDKDNDGCISVSEWIHGLSLFLRG), 101–136 (TLDEKMKYCFEVFDLNGDGFISKEEMFHMLKNSLLK), and 146–181 (GIKDLVEITLKKMDHDHDGKLSFVDYEKAVREENLL). Ca(2+) is bound by residues Asp-78, Asp-80, Asp-82, Cys-84, Glu-89, Asp-114, Asn-116, Asp-118, Glu-125, Asp-159, Asp-161, Asp-163, Lys-165, and Asp-170.

As to quaternary structure, component of the outer dynein arm-docking complex along with ODAD1, ODAD2, ODAD3 and ODAD4.

The protein localises to the cytoplasm. It is found in the cytoskeleton. Its subcellular location is the cilium axoneme. The protein resides in the cell projection. It localises to the cilium. The protein localises to the flagellum. In terms of biological role, component of the outer dynein arm-docking complex (ODA-DC) that mediates outer dynein arms (ODA) binding onto the doublet microtubule. Seems to regulate the assembly of both ODAs and their axonemal docking complex onto ciliary microtubules. Regulates ciliary and flagellar motility and is required for cilia-driven determination of body laterality. The sequence is that of Calaxin (Clxn) from Mus musculus (Mouse).